Reading from the N-terminus, the 546-residue chain is MAAKEIIFHDGARAKLVEGVNLLANAVKVTLGPKGRNVVLERSFGSPVVTKDGVSVAKEIELADKVQNIGAQLVKEVASKTSDAAGDGTTTATVLAQAIVREGQKYVAAGLNPLDLKRGIDKAVAAAVDELKKISKPTTTSKEIAQVATISANGEESIGQRIAEAIDRVGKEGVITVEDGKSLADELDVVEGLQFDRGYLSPYFINHPERQLAVLDEPFILLHDKKISNIRDLLPVLEQVAKAGRPLLIVAEDVEGEALATLVVNNIRGILKTVAVKAPGFGDRRKALLEDIAILTGGQVITEETGLTLEKATLQELGRAKRIEVGKENTTLIDGAGDKPNIDARVKQIRAQIAEATSDYDREKLQERVAKLAGGVAVIKVGGATEVEVKEKKDRVDDALHATRAAVEEGIVPGGGVALIRVKQAIAALAGANADQKAGISIVLRALEEPLRQIVANAGEEASVVVATVAAGQGNYGYNAATGEYGDLVESGVLDPTKVTRTALQNAASIAGLLLTTDATVHEAPKDAPPAAPAGVPGAGGPGFDF.

ATP is bound by residues Thr-30 to Pro-33, Lys-51, Asp-87 to Thr-91, Gly-415, Asn-479 to Ala-481, and Asp-495. The tract at residues Ala-524–Phe-546 is disordered. Positions Pro-537–Phe-546 are enriched in gly residues.

It belongs to the chaperonin (HSP60) family. In terms of assembly, forms a cylinder of 14 subunits composed of two heptameric rings stacked back-to-back. Interacts with the co-chaperonin GroES.

The protein localises to the cytoplasm. The catalysed reaction is ATP + H2O + a folded polypeptide = ADP + phosphate + an unfolded polypeptide.. In terms of biological role, together with its co-chaperonin GroES, plays an essential role in assisting protein folding. The GroEL-GroES system forms a nano-cage that allows encapsulation of the non-native substrate proteins and provides a physical environment optimized to promote and accelerate protein folding. The sequence is that of Chaperonin GroEL 2 from Burkholderia pseudomallei (strain 1710b).